Here is a 350-residue protein sequence, read N- to C-terminus: Phosphate acyltransferase (350 aa).

This sequence belongs to the PlsX family. In terms of assembly, homodimer. Probably interacts with PlsY.

The protein resides in the cytoplasm. The enzyme catalyses a fatty acyl-[ACP] + phosphate = an acyl phosphate + holo-[ACP]. Its pathway is lipid metabolism; phospholipid metabolism. Catalyzes the reversible formation of acyl-phosphate (acyl-PO(4)) from acyl-[acyl-carrier-protein] (acyl-ACP). This enzyme utilizes acyl-ACP as fatty acyl donor, but not acyl-CoA. The protein is Phosphate acyltransferase of Chelativorans sp. (strain BNC1).